Consider the following 369-residue polypeptide: Histidinol-phosphate aminotransferase (369 aa).

An N6-(pyridoxal phosphate)lysine modification is found at lysine 223.

Belongs to the class-II pyridoxal-phosphate-dependent aminotransferase family. Histidinol-phosphate aminotransferase subfamily. In terms of assembly, homodimer. The cofactor is pyridoxal 5'-phosphate.

It catalyses the reaction L-histidinol phosphate + 2-oxoglutarate = 3-(imidazol-4-yl)-2-oxopropyl phosphate + L-glutamate. The protein operates within amino-acid biosynthesis; L-histidine biosynthesis; L-histidine from 5-phospho-alpha-D-ribose 1-diphosphate: step 7/9. In terms of biological role, catalyzes the conversion of imidazole acetol phosphate to histidinol phosphate. Can also transaminate aromatic amino acids and histidine in addition to histidinol phosphate. In Zymomonas mobilis subsp. mobilis (strain ATCC 31821 / ZM4 / CP4), this protein is Histidinol-phosphate aminotransferase.